We begin with the raw amino-acid sequence, 309 residues long: Homoserine O-succinyltransferase (309 aa).

Cysteine 142 (acyl-thioester intermediate) is an active-site residue. Residues lysine 163 and serine 192 each contribute to the substrate site. The active-site Proton acceptor is histidine 235. Residue glutamate 237 is part of the active site. Residue arginine 249 coordinates substrate.

It belongs to the MetA family.

The protein localises to the cytoplasm. It catalyses the reaction L-homoserine + succinyl-CoA = O-succinyl-L-homoserine + CoA. It functions in the pathway amino-acid biosynthesis; L-methionine biosynthesis via de novo pathway; O-succinyl-L-homoserine from L-homoserine: step 1/1. Transfers a succinyl group from succinyl-CoA to L-homoserine, forming succinyl-L-homoserine. In Citrobacter koseri (strain ATCC BAA-895 / CDC 4225-83 / SGSC4696), this protein is Homoserine O-succinyltransferase.